A 535-amino-acid chain; its full sequence is CTP synthase (535 aa).

Residues 1-268 (MSTKYIFVTG…DQIVCDHLKL (268 aa)) are amidoligase domain. S14 is a CTP binding site. S14 contacts UTP. Residue 15–20 (SIGKGI) coordinates ATP. Position 55 (Y55) interacts with L-glutamine. ATP is bound at residue D72. Residues D72 and E142 each coordinate Mg(2+). Residues 149 to 151 (DIE), 189 to 194 (KTKPTQ), and K225 contribute to the CTP site. UTP-binding positions include 189–194 (KTKPTQ) and K225. The 243-residue stretch at 293-535 (KISLVGKYVE…FVTAAVENSN (243 aa)) folds into the Glutamine amidotransferase type-1 domain. G355 is an L-glutamine binding site. C382 acts as the Nucleophile; for glutamine hydrolysis in catalysis. L-glutamine is bound by residues 383-386 (LGMQ), E406, and R464. Active-site residues include H509 and E511.

The protein belongs to the CTP synthase family. In terms of assembly, homotetramer.

The enzyme catalyses UTP + L-glutamine + ATP + H2O = CTP + L-glutamate + ADP + phosphate + 2 H(+). It catalyses the reaction L-glutamine + H2O = L-glutamate + NH4(+). The catalysed reaction is UTP + NH4(+) + ATP = CTP + ADP + phosphate + 2 H(+). It functions in the pathway pyrimidine metabolism; CTP biosynthesis via de novo pathway; CTP from UDP: step 2/2. Allosterically activated by GTP, when glutamine is the substrate; GTP has no effect on the reaction when ammonia is the substrate. The allosteric effector GTP functions by stabilizing the protein conformation that binds the tetrahedral intermediate(s) formed during glutamine hydrolysis. Inhibited by the product CTP, via allosteric rather than competitive inhibition. Its function is as follows. Catalyzes the ATP-dependent amination of UTP to CTP with either L-glutamine or ammonia as the source of nitrogen. Regulates intracellular CTP levels through interactions with the four ribonucleotide triphosphates. The sequence is that of CTP synthase from Streptococcus pneumoniae (strain ATCC BAA-255 / R6).